A 226-amino-acid chain; its full sequence is Sugar fermentation stimulation protein homolog (226 aa).

The protein belongs to the SfsA family.

The protein is Sugar fermentation stimulation protein homolog of Clostridium beijerinckii (strain ATCC 51743 / NCIMB 8052) (Clostridium acetobutylicum).